A 907-amino-acid chain; its full sequence is Protein translocase subunit SecA (907 aa).

ATP contacts are provided by residues Gln87, 105–109 (GEGKT), and Asp512. The disordered stretch occupies residues 834-907 (QSDVDDMEQR…KYKQCHGKLS (74 aa)). Positions 840-856 (MEQRRREEEAKIQRDYQ) are enriched in basic and acidic residues. Residues 865–876 (DESQASSDNTPK) are compositionally biased toward polar residues. Residues 878-887 (MIREGDKVGR) show a composition bias toward basic and acidic residues. Cys891, Cys893, Cys902, and His903 together coordinate Zn(2+). The segment covering 897 to 907 (KKYKQCHGKLS) has biased composition (basic residues).

Belongs to the SecA family. In terms of assembly, monomer and homodimer. Part of the essential Sec protein translocation apparatus which comprises SecA, SecYEG and auxiliary proteins SecDF-YajC and YidC. It depends on Zn(2+) as a cofactor.

Its subcellular location is the cell inner membrane. The protein resides in the cytoplasm. It carries out the reaction ATP + H2O + cellular proteinSide 1 = ADP + phosphate + cellular proteinSide 2.. Part of the Sec protein translocase complex. Interacts with the SecYEG preprotein conducting channel. Has a central role in coupling the hydrolysis of ATP to the transfer of proteins into and across the cell membrane, serving both as a receptor for the preprotein-SecB complex and as an ATP-driven molecular motor driving the stepwise translocation of polypeptide chains across the membrane. The polypeptide is Protein translocase subunit SecA (Shewanella denitrificans (strain OS217 / ATCC BAA-1090 / DSM 15013)).